An 81-amino-acid polypeptide reads, in one-letter code: uncharacterized protein (81 aa).

An N-terminal signal peptide occupies residues 1–20; it reads MIDDHEALLLLVLSSGPAAL.

This is an uncharacterized protein from Treponema pallidum (strain Nichols).